A 376-amino-acid polypeptide reads, in one-letter code: Glutamate 5-kinase (376 aa).

Lys-15 provides a ligand contact to ATP. The substrate site is built by Ser-55, Asp-141, and Asn-153. Residues 173–174 and 215–221 contribute to the ATP site; these read SD and TGGMQTK. In terms of domain architecture, PUA spans 280–361; it reads AGRLTVDAGA…HAIAEVLDEA (82 aa).

The protein belongs to the glutamate 5-kinase family.

It localises to the cytoplasm. The catalysed reaction is L-glutamate + ATP = L-glutamyl 5-phosphate + ADP. The protein operates within amino-acid biosynthesis; L-proline biosynthesis; L-glutamate 5-semialdehyde from L-glutamate: step 1/2. Catalyzes the transfer of a phosphate group to glutamate to form L-glutamate 5-phosphate. The protein is Glutamate 5-kinase of Salinibacter ruber (strain DSM 13855 / M31).